The following is a 183-amino-acid chain: Glutathione-regulated potassium-efflux system ancillary protein KefG (183 aa).

It belongs to the NAD(P)H dehydrogenase (quinone) family. KefG subfamily. Interacts with KefB.

Its subcellular location is the cell inner membrane. It catalyses the reaction a quinone + NADH + H(+) = a quinol + NAD(+). It carries out the reaction a quinone + NADPH + H(+) = a quinol + NADP(+). Its function is as follows. Regulatory subunit of a potassium efflux system that confers protection against electrophiles. Required for full activity of KefB. This chain is Glutathione-regulated potassium-efflux system ancillary protein KefG, found in Salmonella paratyphi C (strain RKS4594).